Consider the following 791-residue polypeptide: uncharacterized protein (791 aa).

The tract at residues 267–288 is disordered; that stretch reads APGESSAQSSYEQSTRAGDSAP. Over residues 271–283 the composition is skewed to polar residues; sequence SSAQSSYEQSTRA.

This is an uncharacterized protein from Treponema pallidum (strain Nichols).